A 142-amino-acid chain; its full sequence is DNA-directed RNA polymerases I, II, and III subunit rpabc3 (142 aa).

Residues 16-40 form a non-specific ssDNA binding region; the sequence is DPDGKKFDRVSRFVCYSENYEMDLQ.

Belongs to the eukaryotic RPB8 RNA polymerase subunit family. Component of the RNA polymerase I (Pol I), RNA polymerase II (Pol II) and RNA polymerase III (Pol III) complexes consisting of at least 13, 12 and 17 subunits, respectively. Directly interacts with POLR2A.

The protein resides in the nucleus. It localises to the nucleolus. Functionally, DNA-dependent RNA polymerase catalyzes the transcription of DNA into RNA using the four ribonucleoside triphosphates as substrates. Common component of RNA polymerases I, II and III which synthesize ribosomal RNA precursors, mRNA precursors and many functional non-coding RNAs, and small RNAs, such as 5S rRNA and tRNAs, respectively. This chain is DNA-directed RNA polymerases I, II, and III subunit rpabc3 (polr2h), found in Dictyostelium discoideum (Social amoeba).